The following is a 188-amino-acid chain: Elongation factor P (188 aa).

This sequence belongs to the elongation factor P family.

The protein resides in the cytoplasm. It functions in the pathway protein biosynthesis; polypeptide chain elongation. Functionally, involved in peptide bond synthesis. Stimulates efficient translation and peptide-bond synthesis on native or reconstituted 70S ribosomes in vitro. Probably functions indirectly by altering the affinity of the ribosome for aminoacyl-tRNA, thus increasing their reactivity as acceptors for peptidyl transferase. The polypeptide is Elongation factor P (Acidiphilium cryptum (strain JF-5)).